The chain runs to 384 residues: 23S rRNA (uracil(747)-C(5))-methyltransferase RlmC (384 aa).

Positions 7, 15, 18, and 94 each coordinate [4Fe-4S] cluster. Residues glutamine 219, phenylalanine 248, glutamate 269, and asparagine 316 each coordinate S-adenosyl-L-methionine. The active-site Nucleophile is cysteine 343.

Belongs to the class I-like SAM-binding methyltransferase superfamily. RNA M5U methyltransferase family. RlmC subfamily.

The enzyme catalyses uridine(747) in 23S rRNA + S-adenosyl-L-methionine = 5-methyluridine(747) in 23S rRNA + S-adenosyl-L-homocysteine + H(+). Catalyzes the formation of 5-methyl-uridine at position 747 (m5U747) in 23S rRNA. In Shewanella sp. (strain ANA-3), this protein is 23S rRNA (uracil(747)-C(5))-methyltransferase RlmC.